Here is a 360-residue protein sequence, read N- to C-terminus: Mediator of RNA polymerase II transcription subunit 6 (360 aa).

Disordered stretches follow at residues 186–238 (PAQP…NDPL) and 316–360 (AAAA…PGAA). Low complexity-rich tracts occupy residues 190–205 (SAGA…YTAS) and 316–325 (AAAAAANANA).

The protein belongs to the Mediator complex subunit 6 family. Component of the Mediator complex.

The protein localises to the nucleus. Functionally, component of the Mediator complex, a coactivator involved in the regulated transcription of nearly all RNA polymerase II-dependent genes. Mediator functions as a bridge to convey information from gene-specific regulatory proteins to the basal RNA polymerase II transcription machinery. Mediator is recruited to promoters by direct interactions with regulatory proteins and serves as a scaffold for the assembly of a functional preinitiation complex with RNA polymerase II and the general transcription factors. The chain is Mediator of RNA polymerase II transcription subunit 6 (med-6) from Neurospora crassa (strain ATCC 24698 / 74-OR23-1A / CBS 708.71 / DSM 1257 / FGSC 987).